Here is a 395-residue protein sequence, read N- to C-terminus: S-adenosylmethionine synthase (395 aa).

Residue His16 coordinates ATP. Mg(2+) is bound at residue Asp18. Glu44 lines the K(+) pocket. L-methionine is bound by residues Glu57 and Gln100. The tract at residues 100-110 (QSPDIAQGVDR) is flexible loop. ATP is bound by residues 167–169 (DAK), 233–234 (RF), Asp242, 248–249 (RK), Ala265, and Lys269. Asp242 lines the L-methionine pocket. Lys273 is an L-methionine binding site.

This sequence belongs to the AdoMet synthase family. As to quaternary structure, homotetramer; dimer of dimers. Mg(2+) is required as a cofactor. It depends on K(+) as a cofactor.

The protein resides in the cytoplasm. It carries out the reaction L-methionine + ATP + H2O = S-adenosyl-L-methionine + phosphate + diphosphate. The protein operates within amino-acid biosynthesis; S-adenosyl-L-methionine biosynthesis; S-adenosyl-L-methionine from L-methionine: step 1/1. In terms of biological role, catalyzes the formation of S-adenosylmethionine (AdoMet) from methionine and ATP. The overall synthetic reaction is composed of two sequential steps, AdoMet formation and the subsequent tripolyphosphate hydrolysis which occurs prior to release of AdoMet from the enzyme. This Burkholderia thailandensis (strain ATCC 700388 / DSM 13276 / CCUG 48851 / CIP 106301 / E264) protein is S-adenosylmethionine synthase.